We begin with the raw amino-acid sequence, 796 residues long: Bud site selection protein 27 (796 aa).

Residues 81–121 (KEEAITFVDDKLKLMEDAIEQFNLKIEEAKKTLDNLNHMED) are a coiled coil. Over residues 152 to 168 (VISSSVTPTTKQPSQSN) the composition is skewed to polar residues. 5 disordered regions span residues 152 to 197 (VISS…EENL), 300 to 344 (LRAQ…QVGF), 421 to 458 (EGEA…TTRS), 535 to 624 (EKEP…AKTG), and 752 to 796 (ATAS…DSKP). Basic and acidic residues-rich tracts occupy residues 169–197 (SKKE…EENL) and 306–318 (SQDH…DVNK). Positions 427-441 (SNRRTRVSRFRKDRA) are enriched in basic residues. Basic and acidic residues predominate over residues 535–550 (EKEPEINSKSEFETPF). Residues 551-568 (KKKKLKSLQKPRSSKSMK) are compositionally biased toward basic residues. Positions 579–589 (ISDDDYDDDDD) are enriched in acidic residues. Residue Ser580 is modified to Phosphoserine. The span at 601 to 610 (NNTDEQDKFP) shows a compositional bias: basic and acidic residues.

The protein belongs to the prefoldin subunit alpha family.

It localises to the cytoplasm. In terms of biological role, involved in gene expression controlled by TOR kinase and nutrient signaling. May also be involved in positioning the proximal bud pole signal. In Saccharomyces cerevisiae (strain ATCC 204508 / S288c) (Baker's yeast), this protein is Bud site selection protein 27 (BUD27).